The primary structure comprises 124 residues: Fluoride-specific ion channel FluC (124 aa).

A run of 4 helical transmembrane segments spans residues 4 to 24 (LLLV…ISIF), 35 to 55 (FGTL…YALG), 60 to 80 (ISPE…TTFS), and 102 to 122 (VVLN…LVFS). The Na(+) site is built by Gly74 and Thr77.

The protein belongs to the fluoride channel Fluc/FEX (TC 1.A.43) family.

Its subcellular location is the cell inner membrane. The catalysed reaction is fluoride(in) = fluoride(out). Na(+) is not transported, but it plays an essential structural role and its presence is essential for fluoride channel function. Functionally, fluoride-specific ion channel. Important for reducing fluoride concentration in the cell, thus reducing its toxicity. The sequence is that of Fluoride-specific ion channel FluC from Shewanella oneidensis (strain ATCC 700550 / JCM 31522 / CIP 106686 / LMG 19005 / NCIMB 14063 / MR-1).